Consider the following 266-residue polypeptide: 4-hydroxy-tetrahydrodipicolinate reductase (266 aa).

10 to 15 provides a ligand contact to NAD(+); it reads GPRGRM. Lys38 contacts NADP(+). NAD(+)-binding positions include 99–101 and 125–128; these read GTT and APNF. Residue His155 is the Proton donor/acceptor of the active site. His156 provides a ligand contact to (S)-2,3,4,5-tetrahydrodipicolinate. The Proton donor role is filled by Lys159. 165–166 is a binding site for (S)-2,3,4,5-tetrahydrodipicolinate; it reads GT.

It belongs to the DapB family.

The protein localises to the cytoplasm. The catalysed reaction is (S)-2,3,4,5-tetrahydrodipicolinate + NAD(+) + H2O = (2S,4S)-4-hydroxy-2,3,4,5-tetrahydrodipicolinate + NADH + H(+). The enzyme catalyses (S)-2,3,4,5-tetrahydrodipicolinate + NADP(+) + H2O = (2S,4S)-4-hydroxy-2,3,4,5-tetrahydrodipicolinate + NADPH + H(+). It functions in the pathway amino-acid biosynthesis; L-lysine biosynthesis via DAP pathway; (S)-tetrahydrodipicolinate from L-aspartate: step 4/4. Functionally, catalyzes the conversion of 4-hydroxy-tetrahydrodipicolinate (HTPA) to tetrahydrodipicolinate. The protein is 4-hydroxy-tetrahydrodipicolinate reductase of Bacillus cereus (strain ZK / E33L).